Here is a 108-residue protein sequence, read N- to C-terminus: Histone H4 (108 aa).

A disordered region spans residues 1–36 (MSSAQSRGGKTGGKVGGKVGAKRHKKTQKEHINGIT). Over residues 9 to 19 (GKTGGKVGGKV) the composition is skewed to gly residues.

This sequence belongs to the histone H4 family. In terms of assembly, the nucleosome is a histone octamer containing two molecules each of H2A, H2B, H3 and H4 assembled in one H3-H4 heterotetramer and two H2A-H2B heterodimers. The octamer wraps approximately 147 bp of DNA.

It localises to the nucleus. Its subcellular location is the chromosome. Core component of nucleosome. Nucleosomes wrap and compact DNA into chromatin, limiting DNA accessibility to the cellular machineries which require DNA as a template. Histones thereby play a central role in transcription regulation, DNA repair, DNA replication and chromosomal stability. DNA accessibility is regulated via a complex set of post-translational modifications of histones, also called histone code, and nucleosome remodeling. This is Histone H4 (H4a) from Dictyostelium discoideum (Social amoeba).